The chain runs to 476 residues: FAD-dependent monooxygenase prhF (476 aa).

FAD contacts are provided by E41, G55, and R114. Y222 is an active-site residue. Residues D314 and A327 each coordinate FAD. An N-linked (GlcNAc...) asparagine glycan is attached at N343. A helical transmembrane segment spans residues 447-467; it reads LGSTPIQMLTLLLPCLFYFMY. N471 is a glycosylation site (N-linked (GlcNAc...) asparagine).

This sequence belongs to the paxM FAD-dependent monooxygenase family. FAD serves as cofactor.

It localises to the membrane. The protein operates within secondary metabolite biosynthesis; terpenoid biosynthesis. FAD-dependent monooxygenase; part of the gene cluster that mediates the biosynthesis of paraherquonin, a meroterpenoid with a unique, highly congested hexacyclic molecular architecture. The first step of the pathway is the synthesis of 3,5-dimethylorsellinic acid (DMOA) by the polyketide synthase prhL. Synthesis of DMOA is followed by farnesylation by the prenyltransferase prhE, methylesterification by the methyl-transferase prhM, epoxidation of the prenyl chain by the flavin-dependent monooxygenase prhF, and cyclization of the farnesyl moiety by the terpene cyclase prhH, to yield the tetracyclic intermediate, protoaustinoid A. The short chain dehydrogenase prhI then oxidizes the C-3 alcohol group of the terpene cyclase product to transform protoaustinoid A into protoaustinoid B. The FAD-binding monooxygenase prhJ catalyzes the oxidation of protoaustinoid B into preaustinoid A which is further oxidized into preaustinoid A1 by FAD-binding monooxygenase phrK. Finally, prhA leads to berkeleydione via the berkeleyone B intermediate. PrhA is a multifunctional dioxygenase that first desaturates at C5-C6 to form berkeleyone B, followed by rearrangement of the A/B-ring to form the cycloheptadiene moiety in berkeleydione. Berkeleydione serves as the key intermediate for the biosynthesis of paraherquonin as well as many other meroterpenoids. The cytochrome P450 monooxygenases prhB, prhD, and prhN, as well as the isomerase prhC, are probably involved in the late stage of paraherquonin biosynthesis, after the production of berkeleydione. Especially prhC might be a multifunctional enzyme that catalyzes the D-ring expansion via intramolecular methoxy rearrangement, as well as the hydrolysis of the expanded D-ring. This Penicillium brasilianum protein is FAD-dependent monooxygenase prhF.